The sequence spans 878 residues: F-box DNA helicase protein 1 (878 aa).

Positions 8 to 56 constitute an F-box domain; sequence SCKFYRLPLEIIPLICRFLSVQDIQSFIRVFPSFQTILDSSNDLFWKKK.

Belongs to the helicase family. UvrD subfamily. Part of the E3 ubiquitin ligase Skp1-Cullin-1-F-box (SCF) complex. Interacts with skp1 and ssb1. It depends on Mg(2+) as a cofactor. Mn(2+) is required as a cofactor.

Its subcellular location is the cytoplasm. The protein localises to the nucleus. It catalyses the reaction Couples ATP hydrolysis with the unwinding of duplex DNA by translocating in the 3'-5' direction.. The catalysed reaction is ATP + H2O = ADP + phosphate + H(+). The protein operates within protein modification; protein ubiquitination. Functionally, involved in ATP-dependent DNA-unwinding in a 3' to 5' direction, and ATP-ase activities stimulated by the single-stranded DNA-binding protein ssb1. Essential for viability and normal growth of stationary phase cells and in the absence of either srs2 or rqh1 DNA helicase. Involved in DNA recombination repair of strand breaks and stalled or collapsed replication forks, on the rhp51-dependent pathway: promotes rhp51 filament dissolution from stalled forks, thereby inhibiting homologous recombination and preventing excessive recombination. Ubiquitination and DNA helicase activities are essential for controlling rhp51-dependent recombination in the absence of rad22. Plays a role in the processing of toxic recombination intermediates. Promotes proper chromosome segregation. This is F-box DNA helicase protein 1 (fbh1) from Schizosaccharomyces pombe (strain 972 / ATCC 24843) (Fission yeast).